Consider the following 242-residue polypeptide: DNA repair protein RecO (242 aa).

It belongs to the RecO family. As to quaternary structure, monomer.

Its function is as follows. Involved in DNA repair and RecF pathway recombination. The chain is DNA repair protein RecO from Salmonella schwarzengrund (strain CVM19633).